The following is a 77-amino-acid chain: U8-lycotoxin-Ls1t (77 aa).

Positions 1 to 20 (MKLIIFTGLVLFAIVSLIEA) are cleaved as a signal peptide. Positions 21-26 (QAENEK) are excised as a propeptide.

Belongs to the neurotoxin 19 (CSTX) family. 08 (U8-Lctx) subfamily. Post-translationally, contains 4 disulfide bonds. In terms of tissue distribution, expressed by the venom gland.

It localises to the secreted. The polypeptide is U8-lycotoxin-Ls1t (Lycosa singoriensis (Wolf spider)).